Reading from the N-terminus, the 543-residue chain is Sodium/glucose cotransporter (543 aa).

14 consecutive transmembrane segments (helical) span residues 10–30 (FIDI…GLWV), 45–65 (FLAG…AANI), 79–99 (SIGL…IIVG), 129–149 (ILAV…VLYL), 156–176 (TILG…ALVY), 193–213 (VFFL…FIGG), 246–266 (LPGI…YWGF), 287–307 (IVFA…PGIA), 345–365 (FLPV…IVSS), 401–421 (TAAV…GGIG), 427–447 (IQEY…LGLF), 455–475 (GAII…FMPL), 483–503 (MLYT…STSI), and 523–543 (SFNI…TLFW).

Its subcellular location is the cell membrane. Its function is as follows. Actively transports glucose into cells by Na(+) cotransport. The chain is Sodium/glucose cotransporter (sglT) from Vibrio parahaemolyticus.